The primary structure comprises 947 residues: Protein translocase subunit SecA (947 aa).

ATP contacts are provided by residues glutamine 85, 103–107 (GEGKT), and aspartate 514. The disordered stretch occupies residues 864-947 (AAPSLDKGAQ…QAKGGRRRKK (84 aa)). Positions 884-900 (PEIRAKGLDAPQRRDLH) are enriched in basic and acidic residues. The span at 934-947 (ERRKQAKGGRRRKK) shows a compositional bias: basic residues.

It belongs to the SecA family. Monomer and homodimer. Part of the essential Sec protein translocation apparatus which comprises SecA, SecYEG and auxiliary proteins SecDF. Other proteins may also be involved.

It is found in the cell membrane. The protein localises to the cytoplasm. The catalysed reaction is ATP + H2O + cellular proteinSide 1 = ADP + phosphate + cellular proteinSide 2.. Its function is as follows. Part of the Sec protein translocase complex. Interacts with the SecYEG preprotein conducting channel. Has a central role in coupling the hydrolysis of ATP to the transfer of proteins into and across the cell membrane, serving as an ATP-driven molecular motor driving the stepwise translocation of polypeptide chains across the membrane. The chain is Protein translocase subunit SecA from Streptomyces lividans.